The sequence spans 260 residues: 3'-5' ssDNA/RNA exonuclease TatD (260 aa).

A divalent metal cation-binding residues include glutamate 92, histidine 128, and histidine 153.

The protein belongs to the metallo-dependent hydrolases superfamily. TatD-type hydrolase family. TatD subfamily. In terms of assembly, monomer. Mg(2+) serves as cofactor.

The protein localises to the cytoplasm. In terms of biological role, 3'-5' exonuclease that prefers single-stranded DNA and RNA. May play a role in the H(2)O(2)-induced DNA damage repair. The polypeptide is 3'-5' ssDNA/RNA exonuclease TatD (Pantoea ananatis (strain LMG 20103)).